A 197-amino-acid chain; its full sequence is Large ribosomal subunit protein eL15 (197 aa).

Basic residues-rich tracts occupy residues 70 to 90 (PKGG…RMGK), 163 to 179 (RGKT…RKRG), and 187 to 197 (PSLRAHRRRGK). Disordered stretches follow at residues 70–99 (PKGG…GKSK) and 163–197 (RGKT…RRGK).

The protein belongs to the eukaryotic ribosomal protein eL15 family.

The protein is Large ribosomal subunit protein eL15 of Methanopyrus kandleri (strain AV19 / DSM 6324 / JCM 9639 / NBRC 100938).